We begin with the raw amino-acid sequence, 167 residues long: MAKEQQVQANDLQEKLIAVNRVSKTVKGGRIMSFTALTVVGDGNGRVGFGYGKAREVPAAIQKAMEKARRNMVTIALNEGTLHHPVKGRHSGSKVYMQPAAEGTGVIAGGAMRAVLEVAGVHNVLSKAYGSTNPINIVRATIDALVDVKSPEMVAAKRGLTVEAISE.

Residues 12–75 (LQEKLIAVNR…EKARRNMVTI (64 aa)) form the S5 DRBM domain.

The protein belongs to the universal ribosomal protein uS5 family. Part of the 30S ribosomal subunit. Contacts proteins S4 and S8.

In terms of biological role, with S4 and S12 plays an important role in translational accuracy. Functionally, located at the back of the 30S subunit body where it stabilizes the conformation of the head with respect to the body. This chain is Small ribosomal subunit protein uS5, found in Vibrio vulnificus (strain CMCP6).